Reading from the N-terminus, the 215-residue chain is Ectodysplasin-A receptor-associated adapter protein (215 aa).

Disordered stretches follow at residues 1 to 41 (MGLR…FNMS) and 62 to 86 (LNCP…TGDP). Basic and acidic residues predominate over residues 17–28 (GHQEDHMVKEPV). The Death domain occupies 123–202 (DVIRIKLDPC…KVLRRWVDEE (80 aa)).

Self-associates and binds EDAR, TRAF1, TRAF2 and TRAF3. In terms of tissue distribution, detected in adult pancreas, placenta and fetal skin, and at lower levels in lung, thymus, prostate and testis.

The protein localises to the cytoplasm. Its function is as follows. Adapter protein that interacts with EDAR DEATH domain and couples the receptor to EDA signaling pathway during morphogenesis of ectodermal organs. Mediates the activation of NF-kappa-B. This Homo sapiens (Human) protein is Ectodysplasin-A receptor-associated adapter protein (EDARADD).